Here is a 309-residue protein sequence, read N- to C-terminus: Taste receptor type 2 member 46 (309 aa).

Met-1 is a topological domain (extracellular). A helical membrane pass occupies residues 2 to 22; sequence ITFLPIIFSILIVVTFVIGNF. Topologically, residues 23 to 46 are cytoplasmic; that stretch reads ANGFIALANSIEWFKRQKISFADQ. A helical membrane pass occupies residues 47–67; it reads ILTALAVSRVGLLWVLLLNWY. Topologically, residues 68 to 86 are extracellular; that stretch reads ATELNPAFYSIEVRITAYN. Residues 87 to 107 traverse the membrane as a helical segment; the sequence is LWAVINHFSNWLATSLSIFYL. The Cytoplasmic segment spans residues 108-126; that stretch reads LKIANFSNLIFLRLKRRVK. A helical transmembrane segment spans residues 127-147; the sequence is SVVLVILLGPLLFLVCHLFVI. Residues 148-178 are Extracellular-facing; the sequence is NMNQIIWTKEYEGNMTWKIKLRSAMYLSNIT. 2 N-linked (GlcNAc...) asparagine glycosylation sites follow: Asn-161 and Asn-176. Residues 179-199 form a helical membrane-spanning segment; that stretch reads VTILANLVPFTLTLISFLLLI. At 200–229 the chain is on the cytoplasmic side; that stretch reads CSLCKHLKKMQLHGKGSQDPSMKVHIKALQ. Residues 230 to 250 form a helical membrane-spanning segment; it reads TVTSFLLLCAIYFLSIIMSVW. The Extracellular segment spans residues 251 to 259; sequence SFESLENKP. A helical transmembrane segment spans residues 260-280; that stretch reads VFMFCEAITFSYPSTHPFILI. The Cytoplasmic segment spans residues 281–309; that stretch reads WGNKKLKQTFLSVLWHVRYWVKGEEPSSP.

Belongs to the G-protein coupled receptor T2R family.

Its subcellular location is the membrane. It localises to the cell projection. The protein resides in the cilium membrane. Its function is as follows. Receptor that may play a role in the perception of bitterness and is gustducin-linked. May play a role in sensing the chemical composition of the gastrointestinal content. The activity of this receptor may stimulate alpha gustducin, mediate PLC-beta-2 activation and lead to the gating of TRPM5. In airway epithelial cells, binding of bitter compounds increases the intracellular calcium ion concentration and stimulates ciliary beat frequency. The sequence is that of Taste receptor type 2 member 46 (TAS2R46) from Pan paniscus (Pygmy chimpanzee).